The primary structure comprises 206 residues: Undecaprenyl-diphosphatase (206 aa).

A run of 5 helical transmembrane segments spans residues 5 to 25, 53 to 73, 79 to 99, 138 to 158, and 164 to 184; these read YYWI…LIGG, FLSK…LLIF, IGIT…VSKY, VTLL…EAVL, and VYVG…GSWI.

It localises to the cell membrane. The catalysed reaction is di-trans,octa-cis-undecaprenyl diphosphate + H2O = di-trans,octa-cis-undecaprenyl phosphate + phosphate + H(+). This chain is Undecaprenyl-diphosphatase (sepP), found in Sulfolobus acidocaldarius (strain ATCC 33909 / DSM 639 / JCM 8929 / NBRC 15157 / NCIMB 11770).